A 372-amino-acid chain; its full sequence is Glutamine synthetase (372 aa).

The 80-residue stretch at 26-105 (IIAEYVWIDS…VLAECWNNDG (80 aa)) folds into the GS beta-grasp domain. A GS catalytic domain is found at 112–372 (HRHEAAKLFE…MTKEYERESL (261 aa)).

The protein belongs to the glutamine synthetase family. In terms of assembly, homooctamer.

The protein resides in the cytoplasm. The catalysed reaction is L-glutamate + NH4(+) + ATP = L-glutamine + ADP + phosphate + H(+). The polypeptide is Glutamine synthetase (GLN1) (Kluyveromyces lactis (strain ATCC 8585 / CBS 2359 / DSM 70799 / NBRC 1267 / NRRL Y-1140 / WM37) (Yeast)).